Here is a 214-residue protein sequence, read N- to C-terminus: Ras-related protein Rab2BV (214 aa).

19–26 (GDSGVGKS) lines the GTP pocket. An Effector region motif is present at residues 41–49 (SKSTIGVEF). GTP is bound by residues 67–71 (DTAGQ) and 125–128 (NKSD). Residues cysteine 211 and cysteine 212 are each lipidated (S-geranylgeranyl cysteine).

This sequence belongs to the small GTPase superfamily. Rab family.

It is found in the cell membrane. The polypeptide is Ras-related protein Rab2BV (RAB2BV) (Beta vulgaris (Sugar beet)).